The following is a 303-amino-acid chain: Peroxisomal trans-2-enoyl-CoA reductase (303 aa).

Residue 23-47 (VTGGATGIGKAIVKELLELGSNVVI) coordinates NADP(+). An N6-succinyllysine modification is found at K32. Residue S49 is modified to Phosphoserine. The active-site Proton acceptor is Y179. A Phosphotyrosine modification is found at Y179. A Microbody targeting signal motif is present at residues 301–303 (AKL).

It belongs to the short-chain dehydrogenases/reductases (SDR) family. Interacts with PEX5, probably required to target it into peroxisomes.

The protein resides in the peroxisome. The enzyme catalyses a (2E)-enoyl-CoA + NADPH + H(+) = a 2,3-saturated acyl-CoA + NADP(+). It catalyses the reaction (2E)-hexenoyl-CoA + NADPH + H(+) = hexanoyl-CoA + NADP(+). It carries out the reaction (2E)-octenoyl-CoA + NADPH + H(+) = octanoyl-CoA + NADP(+). The catalysed reaction is (2E)-decenoyl-CoA + NADPH + H(+) = decanoyl-CoA + NADP(+). The enzyme catalyses (2E)-dodecenoyl-CoA + NADPH + H(+) = dodecanoyl-CoA + NADP(+). It catalyses the reaction (2E)-tetradecenoyl-CoA + NADPH + H(+) = tetradecanoyl-CoA + NADP(+). It functions in the pathway lipid metabolism; fatty acid biosynthesis. Participates in chain elongation of fatty acids. Catalyzes the reduction of trans-2-enoyl-CoAs of varying chain lengths from 6:1 to 16:1, having maximum activity with 10:1 CoA. Has no 2,4-dienoyl-CoA reductase activity. The protein is Peroxisomal trans-2-enoyl-CoA reductase (PECR) of Pongo abelii (Sumatran orangutan).